Here is a 450-residue protein sequence, read N- to C-terminus: 3-phosphoshikimate 1-carboxyvinyltransferase (450 aa).

Residues 1-26 (MSAHGDPIPMTAHPSGPLSGTAQVPG) are disordered. 3 residues coordinate 3-phosphoshikimate: lysine 28, serine 29, and arginine 33. Lysine 28 contributes to the phosphoenolpyruvate binding site. Phosphoenolpyruvate is bound by residues glycine 101 and arginine 129. Serine 174, glutamine 176, aspartate 327, and lysine 354 together coordinate 3-phosphoshikimate. Glutamine 176 provides a ligand contact to phosphoenolpyruvate. Catalysis depends on aspartate 327, which acts as the Proton acceptor. The phosphoenolpyruvate site is built by arginine 358 and arginine 403.

Belongs to the EPSP synthase family. As to quaternary structure, monomer.

The protein localises to the cytoplasm. It carries out the reaction 3-phosphoshikimate + phosphoenolpyruvate = 5-O-(1-carboxyvinyl)-3-phosphoshikimate + phosphate. It participates in metabolic intermediate biosynthesis; chorismate biosynthesis; chorismate from D-erythrose 4-phosphate and phosphoenolpyruvate: step 6/7. Catalyzes the transfer of the enolpyruvyl moiety of phosphoenolpyruvate (PEP) to the 5-hydroxyl of shikimate-3-phosphate (S3P) to produce enolpyruvyl shikimate-3-phosphate and inorganic phosphate. The protein is 3-phosphoshikimate 1-carboxyvinyltransferase of Dinoroseobacter shibae (strain DSM 16493 / NCIMB 14021 / DFL 12).